We begin with the raw amino-acid sequence, 90 residues long: DNA-binding protein HU-1 (90 aa).

The residue at position 4 (Thr4) is a Phosphothreonine. Residues 55–90 are disordered; that stretch reads RSARKGRNPQTGEEIEIPATKNPAFKPGKQLKDAVN.

This sequence belongs to the bacterial histone-like protein family. Homodimer.

Histone-like DNA-binding protein which is capable of wrapping DNA to stabilize it, and thus to prevent its denaturation under extreme environmental conditions. The protein is DNA-binding protein HU-1 (hup1) of Halalkalibacterium halodurans (strain ATCC BAA-125 / DSM 18197 / FERM 7344 / JCM 9153 / C-125) (Bacillus halodurans).